Reading from the N-terminus, the 155-residue chain is Small ribosomal subunit protein uS7 (155 aa).

It belongs to the universal ribosomal protein uS7 family. As to quaternary structure, part of the 30S ribosomal subunit. Contacts proteins S9 and S11.

Its function is as follows. One of the primary rRNA binding proteins, it binds directly to 16S rRNA where it nucleates assembly of the head domain of the 30S subunit. Is located at the subunit interface close to the decoding center, probably blocks exit of the E-site tRNA. The protein is Small ribosomal subunit protein uS7 of Lactococcus lactis subsp. lactis (strain IL1403) (Streptococcus lactis).